The chain runs to 391 residues: Probable sugar efflux transporter (391 aa).

Transmembrane regions (helical) follow at residues 16-36 (VFVF…PVAL), 51-71 (VGLM…PLML), 82-102 (LLFL…AWNF), 110-130 (MGIA…VIRV), 138-158 (QALG…LPLG), 170-190 (TFGV…KLLP), 210-230 (PLLM…FTTY), 247-267 (ITTL…FLFG), 277-297 (FIAF…VFKN), 300-320 (WVVF…GISL), 338-358 (IYSG…SIVI), and 361-381 (LGLG…LFWL).

It belongs to the major facilitator superfamily. SotB (TC 2.A.1.2) family.

Its subcellular location is the cell inner membrane. Involved in the efflux of sugars. The physiological role may be the reduction of the intracellular concentration of toxic sugars or sugar metabolites. The chain is Probable sugar efflux transporter from Helicobacter pylori (strain ATCC 700392 / 26695) (Campylobacter pylori).